Reading from the N-terminus, the 450-residue chain is MKVIDQFKNKKVLVLGLAKSGESAARLLDKLGAIVTVNDGKPFEDNPAAQCLLEEGIKVITGGHPLELLDEEFALMVKNPGIPYSNPMIEKALAKGIPVLTEVELAYLISEAPIIGITGSNGKTTTTTMIGEVLTAAGQHGLLSGNIGYPASQVAQIATDKNTLVMELSSFQLMGVQEFHPEIAVITNLMPTHIDYHGLFEEYVAAKWNIQNKMTAADFLVLNFNQDLVKDLASKTEATVVPFSTLEKVDGAYLEDGQLYFRGEVVMAANEIGVPGSHNVENALATIAVAKLRGVDNQTIKETLSAFGGVKHRLQFVDDIKGVKFYNDSKSTNILATQKALSGFDNSKVVLIAGGLDRGNEFDELVPDITGLKKMVILGQSAERVKRAADKAGVAYVEATDIADATRKAYELATQGDVVLLSPANASWDMYANFEVRGDLFIDTVAELKE.

119–125 (GSNGKTT) contacts ATP.

The protein belongs to the MurCDEF family.

The protein localises to the cytoplasm. It carries out the reaction UDP-N-acetyl-alpha-D-muramoyl-L-alanine + D-glutamate + ATP = UDP-N-acetyl-alpha-D-muramoyl-L-alanyl-D-glutamate + ADP + phosphate + H(+). It participates in cell wall biogenesis; peptidoglycan biosynthesis. Functionally, cell wall formation. Catalyzes the addition of glutamate to the nucleotide precursor UDP-N-acetylmuramoyl-L-alanine (UMA). This chain is UDP-N-acetylmuramoylalanine--D-glutamate ligase, found in Streptococcus pneumoniae serotype 19F (strain G54).